The sequence spans 429 residues: MIELDINASDKSLSHRAVIFSLLAQKPCFVRNFLMGEDCLSSLEIAQNLGAKVENTAKNSFKITPPTTIKEPNKILNCNNSGTSMRLYSGLLSAQKGLFVLSGDNSLNARPMKRIIEPLKAFGAKILGREDNHFAPLAIVGGPLKACDYESPIASAQVKSAFILSALQAQGISAYKESELSRNHTEIMLKSLGANIQNQDGVLKISPLEKPLESFDFTIANDPSSAFFLALACAITPKSRLLLKNVLLNPTRIEAFEVLKKMGAHIEYVIQSKDLEVIGDIYIEHAPLKAISIDQNIASLIDEIPALSIAMLFAKGKSMVRNAKDLRAKESDRIKAVVSNFKALGIECEEFEDGFYIEGLGDASQLKQHFSKIKPPIIKSFNDHRIAMSFAVLTLALPLEIDNLECANISFPTFQLWLNLFKKRSLNGN.

3-phosphoshikimate-binding residues include Lys-11, Ser-12, and Arg-16. A phosphoenolpyruvate-binding site is contributed by Lys-11. 2 residues coordinate phosphoenolpyruvate: Gly-82 and Arg-110. The 3-phosphoshikimate site is built by Ser-155, Gln-157, Asp-302, and Lys-329. A phosphoenolpyruvate-binding site is contributed by Gln-157. Residue Asp-302 is the Proton acceptor of the active site. Phosphoenolpyruvate-binding residues include Arg-333 and Arg-385.

The protein belongs to the EPSP synthase family. As to quaternary structure, monomer.

It is found in the cytoplasm. The catalysed reaction is 3-phosphoshikimate + phosphoenolpyruvate = 5-O-(1-carboxyvinyl)-3-phosphoshikimate + phosphate. It participates in metabolic intermediate biosynthesis; chorismate biosynthesis; chorismate from D-erythrose 4-phosphate and phosphoenolpyruvate: step 6/7. Functionally, catalyzes the transfer of the enolpyruvyl moiety of phosphoenolpyruvate (PEP) to the 5-hydroxyl of shikimate-3-phosphate (S3P) to produce enolpyruvyl shikimate-3-phosphate and inorganic phosphate. The polypeptide is 3-phosphoshikimate 1-carboxyvinyltransferase (Helicobacter pylori (strain J99 / ATCC 700824) (Campylobacter pylori J99)).